Consider the following 192-residue polypeptide: Adenylate kinase (192 aa).

An ATP-binding site is contributed by glycine 10 to threonine 15. The interval serine 30–valine 59 is NMP. Residues threonine 31, arginine 36, alanine 57–valine 59, glycine 85–arginine 88, and glutamine 92 each bind AMP. The segment at arginine 126–aspartate 142 is LID. Arginine 127 contacts ATP. Residues arginine 139 and arginine 150 each coordinate AMP. Isoleucine 178 contacts ATP.

It belongs to the adenylate kinase family. As to quaternary structure, monomer.

Its subcellular location is the cytoplasm. It carries out the reaction AMP + ATP = 2 ADP. Its pathway is purine metabolism; AMP biosynthesis via salvage pathway; AMP from ADP: step 1/1. Catalyzes the reversible transfer of the terminal phosphate group between ATP and AMP. Plays an important role in cellular energy homeostasis and in adenine nucleotide metabolism. The chain is Adenylate kinase from Bartonella tribocorum (strain CIP 105476 / IBS 506).